The chain runs to 336 residues: MSFFGFGQSVEVEILLNDAESRKRAEHKTEDGKKEKYFLFYDGETVSGKVSLSLKNPNKRLEHQGIKIEFIGQIELYYDRGNHHEFVSLVKDLARPGEITQSQAFDFEFTHVEKPYESYTGQNVKLRYFLRATISRRLNDVVKEMDIVVHTLSTYPELNSSIKMEVGIEDCLHIEFEYNKSKYHLKDVIVGKIYFLLVRIKIKHMEIDIIKRETTGTGPNVYHENDTIAKYEIMDGAPVRGESIPIRLFLAGYELTPTMRDINKKFSVRYYLNLVLIDEEERRYFKQQEVVLWRKGDIVRKSMSHQAAIASQRFEGTTSLGEVRTPGQLSDNNSRQ.

Ser302, Ser304, and Ser319 each carry phosphoserine.

It belongs to the VPS26 family. In terms of assembly, component of the heterotrimeric retromer cargo-selective complex (CSC), also described as vacuolar protein sorting subcomplex (VPS), formed by VPS26 (VPS26A or VPS26B), VPS29 and VPS35. The CSC has a highly elongated structure with VPS26 and VPS29 binding independently at opposite distal ends of VPS35 as central platform. The CSC is believed to associate with variable sorting nexins to form functionally distinct retromer complex variants. The originally described SNX-BAR retromer is a pentamer containing the CSC and a heterodimeric membrane-deforming subcomplex formed between SNX1 or SNX2 and SNX5 or SNX6 (also called SNX-BAR subcomplex); the respective CSC and SNX-BAR subcomplexes associate with low affinity. The CSC associates with SNX3 to form a SNX3-retromer complex. The CSC associates with SNX27, the WASH complex and the SNX-BAR subcomplex to form the SNX27-retromer complex. Interacts with VPS29, VPS35, TBC1D5, GOLPH3, SNX27. As to expression, ubiquitously expressed in developing embryo and adult. Highly expressed in brain.

It is found in the cytoplasm. Its subcellular location is the membrane. The protein localises to the early endosome. It localises to the late endosome. In terms of biological role, acts as a component of the retromer cargo-selective complex (CSC). The CSC is believed to be the core functional component of retromer or respective retromer complex variants acting to prevent missorting of selected transmembrane cargo proteins into the lysosomal degradation pathway. The recruitment of the CSC to the endosomal membrane involves RAB7A and SNX3. The SNX-BAR retromer mediates retrograde transport of cargo proteins from endosomes to the trans-Golgi network (TGN) and is involved in endosome-to-plasma membrane transport for cargo protein recycling. The SNX3-retromer mediates the retrograde transport of WLS distinct from the SNX-BAR retromer pathway. The SNX27-retromer is believed to be involved in endosome-to-plasma membrane trafficking and recycling of a broad spectrum of cargo proteins. The CSC seems to act as recruitment hub for other proteins, such as the WASH complex and TBC1D5. May be involved in retrograde transport of SORT1 but not of IGF2R. Acts redundantly with VSP26A in SNX-27 mediated endocytic recycling of SLC2A1/GLUT1. The chain is Vacuolar protein sorting-associated protein 26B (Vps26b) from Mus musculus (Mouse).